We begin with the raw amino-acid sequence, 170 residues long: Helix-loop-helix protein 3 (170 aa).

A compositionally biased stretch (low complexity) spans 1–26 (MTASTSSTPSTSTKIPSSSKSSVTKQ). Disordered stretches follow at residues 1-42 (MTAS…VDQV) and 118-170 (TPSP…TETY). Residues 26–39 (QTKQKRNERERKRV) form a basic motif; degenerate region. Residues 26–79 (QTKQKRNERERKRVDQVNQGFVLLQERVPKAAGNKAKLSKVETLREAARYIQEL) form the bHLH domain. The span at 30 to 40 (KRNERERKRVD) shows a compositional bias: basic and acidic residues. Residues 40 to 79 (DQVNQGFVLLQERVPKAAGNKAKLSKVETLREAARYIQEL) are helix-loop-helix motif. The segment covering 143 to 157 (SHYYQESSSSSASTS) has biased composition (low complexity).

In terms of assembly, efficient DNA binding requires dimerization with another bHLH protein. Forms a heterodimer with hlh-2. In terms of tissue distribution, expressed in the ADL sensory neurons.

It is found in the nucleus. Probable transcriptional regulator. May mediate transcriptional activation by binding to the E-box motif 5'-CANNTG-3'. Plays a role in the differentiation of the hermaphrodite-specific motor neurons (HSN) that are required for normal egg laying. Might play a role in serotonin production by regulating expression of the tryptophan hydrolase tph-1 which catalyzes serotonin synthesis, in the HSN neurons. Also plays a role in HSN axon guidance towards the vulva and the ventral nerve cord, possibly by promoting the expression of the netrin receptor unc-40. Under feeding conditions, involved in the regulation of the srh-234 chemoreceptor encoding gene expression in the ADL sensory neurons. Together with hlh-2, involved in the induction of programmed cell death in the sister cells of the serotonergic neurosecretory motor (NSM) neurons, probably through the activation of egl-1 transcription. The protein is Helix-loop-helix protein 3 of Caenorhabditis elegans.